We begin with the raw amino-acid sequence, 51 residues long: Large ribosomal subunit protein eL39 (51 aa).

The protein belongs to the eukaryotic ribosomal protein eL39 family.

The polypeptide is Large ribosomal subunit protein eL39 (Thermococcus gammatolerans (strain DSM 15229 / JCM 11827 / EJ3)).